The chain runs to 86 residues: uncharacterized protein (86 aa).

The next 2 membrane-spanning stretches (helical) occupy residues 20-38 (IQFW…SVYL) and 47-63 (FSTF…TKGV). The disordered stretch occupies residues 67–86 (LSQRREQGKEQGREQGREQE). Over residues 69–86 (QRREQGKEQGREQGREQE) the composition is skewed to basic and acidic residues.

It localises to the cell membrane. This is an uncharacterized protein from Haemophilus influenzae (strain ATCC 51907 / DSM 11121 / KW20 / Rd).